The chain runs to 288 residues: Transmembrane protein 163 (288 aa).

A disordered region spans residues 1 to 64; it reads MEPALGSERR…ESGQFSDGLE (64 aa). Residues 1-87 are Cytoplasmic-facing; it reads MEPALGSERR…HEAQNYRKKA (87 aa). Residue Ser11 is modified to Phosphoserine. Residues 12-24 show a composition bias toward pro residues; it reads PPGPGVPRPPPRG. The span at 25–42 shows a compositional bias: low complexity; that stretch reads HAPSTAAPAPSPAPMSSS. Residues 41-71 form a required for interaction with MCOLN1 region; the sequence is SSVQSDEERQPRISESGQFSDGLEDRGLLES. Phosphoserine occurs at positions 45, 54, 56, and 60. Residues 88 to 108 traverse the membrane as a helical segment; sequence LWVSWLSIIVTLALAVAAFTV. Over 109–115 the chain is Extracellular; the sequence is SVMRYSA. A helical transmembrane segment spans residues 116–136; sequence SAFGFAFDAILDVLSSAIVLW. At 137-149 the chain is on the cytoplasmic side; it reads RYSNAAAVHSANR. Residues 150–170 traverse the membrane as a helical segment; it reads EYIACVILGVIFLLSSICIVV. The Extracellular portion of the chain corresponds to 171–186; sequence KAIHDLSTRLLPEVDD. The helical transmembrane segment at 187–207 threads the bilayer; that stretch reads FLFSVSILSGILCSVLAVLKF. Topologically, residues 208–216 are cytoplasmic; that stretch reads MLGKVLTSR. A helical membrane pass occupies residues 217–237; the sequence is ALITDGFNSLVGGVMGFSILL. Over 238 to 254 the chain is Extracellular; the sequence is SAEVFKHNAAVWYLDGS. A helical membrane pass occupies residues 255–275; it reads IGVLIGLTIFAYGVKLLIDMV. Residues 276 to 288 are Cytoplasmic-facing; it reads PRVRQTRHYEMFE.

It belongs to the TMEM163 family. Homodimer. Interacts with MCOLN1. Interacts with SLC30A1, SLC30A2, SLC30A3 and SLC30A4. Widely expressed, with high expression in the brain, cerebellum, heart, lung and spleen. In the brain, mainly expressed in the glutaminergic neuron subpopulations.

The protein localises to the cytoplasmic vesicle. The protein resides in the secretory vesicle. It localises to the synaptic vesicle membrane. Its subcellular location is the early endosome membrane. It is found in the late endosome membrane. The protein localises to the lysosome membrane. The protein resides in the cell membrane. It catalyses the reaction Zn(2+)(in) = Zn(2+)(out). Its function is as follows. Zinc ion transporter that mediates zinc efflux and plays a crucial role in intracellular zinc homeostasis. Binds the divalent cations Zn(2+), Ni(2+), and to a minor extent Cu(2+). Is a functional modulator of P2X purinoceptors, including P2RX1, P2RX3, P2RX4 and P2RX7. Plays a role in central nervous system development and is required for myelination, and survival and proliferation of oligodendrocytes. The polypeptide is Transmembrane protein 163 (Tmem163) (Mus musculus (Mouse)).